A 145-amino-acid chain; its full sequence is uncharacterized protein (145 aa).

A coiled-coil region spans residues 1–41 (MEQHYHQQNQLRQLKQQQLKELLQQQSKDKEEDEQKHDDYR). Positions 1-91 (MEQHYHQQNQ…LQISEPEGES (91 aa)) are disordered. The span at 7–26 (QQNQLRQLKQQQLKELLQQQ) shows a compositional bias: low complexity. The segment covering 27–42 (SKDKEEDEQKHDDYRS) has biased composition (basic and acidic residues). Residues 43–58 (PTKTTTTTATSTSAAT) show a composition bias toward low complexity.

This is an uncharacterized protein from Dictyostelium discoideum (Social amoeba).